The sequence spans 264 residues: Thymidylate synthase (264 aa).

R21 lines the dUMP pocket. H51 provides a ligand contact to (6R)-5,10-methylene-5,6,7,8-tetrahydrofolate. 126–127 (RR) lines the dUMP pocket. C146 (nucleophile) is an active-site residue. DUMP is bound by residues 166 to 169 (RSCD), N177, and 207 to 209 (HLY). D169 is a binding site for (6R)-5,10-methylene-5,6,7,8-tetrahydrofolate. A263 provides a ligand contact to (6R)-5,10-methylene-5,6,7,8-tetrahydrofolate.

Belongs to the thymidylate synthase family. Bacterial-type ThyA subfamily. In terms of assembly, homodimer.

The protein localises to the cytoplasm. The catalysed reaction is dUMP + (6R)-5,10-methylene-5,6,7,8-tetrahydrofolate = 7,8-dihydrofolate + dTMP. The protein operates within pyrimidine metabolism; dTTP biosynthesis. In terms of biological role, catalyzes the reductive methylation of 2'-deoxyuridine-5'-monophosphate (dUMP) to 2'-deoxythymidine-5'-monophosphate (dTMP) while utilizing 5,10-methylenetetrahydrofolate (mTHF) as the methyl donor and reductant in the reaction, yielding dihydrofolate (DHF) as a by-product. This enzymatic reaction provides an intracellular de novo source of dTMP, an essential precursor for DNA biosynthesis. The polypeptide is Thymidylate synthase (Cronobacter sakazakii (strain ATCC BAA-894) (Enterobacter sakazakii)).